Here is a 1061-residue protein sequence, read N- to C-terminus: DNA primase TraC (1061 aa).

The Toprim domain occupies 850–938 (PALVIGEGYA…GKAIFPIFAP (89 aa)). Residues 1034 to 1061 (EGQRQKVQQLKQQDIEQQEQRQRRARTY) are disordered.

Its function is as follows. Required for autonomous replication in E.coli. Transferred into the recipient cell during bacterial conjugation. Catalyzes the synthesis of short oligoribonucleotide primers with CpA or pCpA at their 5'-termini on a single-stranded template DNA. This chain is DNA primase TraC (traC), found in Escherichia coli.